A 247-amino-acid polypeptide reads, in one-letter code: Peroxisomal membrane protein 11A (247 aa).

At 1–83 (MDAFIRFTNQ…SVRATDLVPR (83 aa)) the chain is on the cytoplasmic side. Residues 84–105 (ICLTLASLNRVIYFICDTVLFV) traverse the membrane as a helical segment. The Lumenal segment spans residues 106 to 219 (RSTGLASGVN…DQLGIYKSNP (114 aa)). The helical transmembrane segment at 220–239 (GIIGLGGLVSSVAGIITVAY) threads the bilayer. The segment at 220-239 (GIIGLGGLVSSVAGIITVAY) is required for homodimerization, interaction with PEX11G, and peroxisomal localization. At 240–247 (PQMKLKTQ) the chain is on the cytoplasmic side.

The protein belongs to the peroxin-11 family. Homodimer. Heterodimer with PEX11G. Probably interacts with COPB2 and COPA. Interacts with PEX19. Interacts with FIS1.

Its subcellular location is the peroxisome membrane. Functionally, may be involved in peroxisomal proliferation and may regulate peroxisomes division. May mediate binding of coatomer proteins to the peroxisomal membrane. Promotes membrane protrusion and elongation on the peroxisomal surface. The protein is Peroxisomal membrane protein 11A (PEX11A) of Bos taurus (Bovine).